The primary structure comprises 312 residues: uncharacterized protein (312 aa).

The next 6 helical transmembrane spans lie at 9–29, 115–135, 187–207, 224–244, 264–284, and 292–312; these read LTLT…GLFI, LATL…IGFI, ITIA…DYIT, ITVA…AGEF, ILSS…IYGF, and MIST…TLIL.

It localises to the cell membrane. This is an uncharacterized protein from Methanocaldococcus jannaschii (strain ATCC 43067 / DSM 2661 / JAL-1 / JCM 10045 / NBRC 100440) (Methanococcus jannaschii).